We begin with the raw amino-acid sequence, 243 residues long: 1-(5-phosphoribosyl)-5-[(5-phosphoribosylamino)methylideneamino] imidazole-4-carboxamide isomerase (243 aa).

The active-site Proton acceptor is the Asp8. Residue Asp130 is the Proton donor of the active site.

The protein belongs to the HisA/HisF family.

It is found in the cytoplasm. It carries out the reaction 1-(5-phospho-beta-D-ribosyl)-5-[(5-phospho-beta-D-ribosylamino)methylideneamino]imidazole-4-carboxamide = 5-[(5-phospho-1-deoxy-D-ribulos-1-ylimino)methylamino]-1-(5-phospho-beta-D-ribosyl)imidazole-4-carboxamide. The protein operates within amino-acid biosynthesis; L-histidine biosynthesis; L-histidine from 5-phospho-alpha-D-ribose 1-diphosphate: step 4/9. This Acinetobacter baylyi (strain ATCC 33305 / BD413 / ADP1) protein is 1-(5-phosphoribosyl)-5-[(5-phosphoribosylamino)methylideneamino] imidazole-4-carboxamide isomerase.